The following is a 379-amino-acid chain: Succinyl-diaminopimelate desuccinylase (379 aa).

His70 contacts Zn(2+). The active site involves Asp72. Residue Asp103 participates in Zn(2+) binding. Catalysis depends on Glu137, which acts as the Proton acceptor. Zn(2+)-binding residues include Glu138, Glu166, and His352.

Belongs to the peptidase M20A family. DapE subfamily. In terms of assembly, homodimer. Zn(2+) serves as cofactor. It depends on Co(2+) as a cofactor.

It carries out the reaction N-succinyl-(2S,6S)-2,6-diaminopimelate + H2O = (2S,6S)-2,6-diaminopimelate + succinate. The protein operates within amino-acid biosynthesis; L-lysine biosynthesis via DAP pathway; LL-2,6-diaminopimelate from (S)-tetrahydrodipicolinate (succinylase route): step 3/3. Its function is as follows. Catalyzes the hydrolysis of N-succinyl-L,L-diaminopimelic acid (SDAP), forming succinate and LL-2,6-diaminopimelate (DAP), an intermediate involved in the bacterial biosynthesis of lysine and meso-diaminopimelic acid, an essential component of bacterial cell walls. The sequence is that of Succinyl-diaminopimelate desuccinylase from Burkholderia pseudomallei (strain 1106a).